The following is a 62-amino-acid chain: MRCLPVFVILLLLIASAPSVDAQLKTKDDVPLASFHDNAKGTQHKRIINWCCLIFYQCCLRR.

Positions 1–22 (MRCLPVFVILLLLIASAPSVDA) are cleaved as a signal peptide. Positions 23 to 44 (QLKTKDDVPLASFHDNAKGTQH) are excised as a propeptide.

It belongs to the conotoxin T superfamily. Contains 2 disulfide bonds that can be either 'C1-C3, C2-C4' or 'C1-C4, C2-C3', since these disulfide connectivities have been observed for conotoxins with cysteine framework V (for examples, see AC P0DQQ7 and AC P81755). In terms of tissue distribution, expressed by the venom duct.

Its subcellular location is the secreted. The protein is Conotoxin Sr5.7 of Conus spurius (Alphabet cone).